The sequence spans 118 residues: D-dopachrome decarboxylase (118 aa).

Pro-2 carries the post-translational modification N-acetylproline. N6-acetyllysine is present on Lys-33.

It belongs to the MIF family. Homotrimer.

It localises to the cytoplasm. The catalysed reaction is D-dopachrome + H(+) = 5,6-dihydroxyindole + CO2. In terms of biological role, tautomerization of D-dopachrome with decarboxylation to give 5,6-dihydroxyindole (DHI). This is D-dopachrome decarboxylase (DDT) from Bos taurus (Bovine).